A 234-amino-acid polypeptide reads, in one-letter code: Adenosine 5'-phosphosulfate reductase (234 aa).

Residues Cys-120, Cys-121, Cys-203, and Cys-206 each contribute to the [4Fe-4S] cluster site. The active-site Nucleophile; cysteine thiosulfonate intermediate is the Cys-229.

The protein belongs to the PAPS reductase family. CysH subfamily. Requires [4Fe-4S] cluster as cofactor.

Its subcellular location is the cytoplasm. The catalysed reaction is [thioredoxin]-disulfide + sulfite + AMP + 2 H(+) = adenosine 5'-phosphosulfate + [thioredoxin]-dithiol. It functions in the pathway sulfur metabolism; hydrogen sulfide biosynthesis; sulfite from sulfate. Functionally, catalyzes the formation of sulfite from adenosine 5'-phosphosulfate (APS) using thioredoxin as an electron donor. This chain is Adenosine 5'-phosphosulfate reductase, found in Bacillus cereus (strain Q1).